We begin with the raw amino-acid sequence, 154 residues long: Transcriptional repressor NrdR (154 aa).

A zinc finger spans residues 3–34; it reads CPFCGNDETKVLESRQVEEGTAVRRRRECERC. In terms of domain architecture, ATP-cone spans 49 to 139; that stretch reads LIVVKKDGRR…VYREFKDVQR (91 aa).

The protein belongs to the NrdR family. Requires Zn(2+) as cofactor.

Functionally, negatively regulates transcription of bacterial ribonucleotide reductase nrd genes and operons by binding to NrdR-boxes. In Desulfitobacterium hafniense (strain DSM 10664 / DCB-2), this protein is Transcriptional repressor NrdR.